The following is a 528-amino-acid chain: Chromosomal replication initiator protein DnaA (528 aa).

Residues 1–104 (MNDDPNALAR…PVDDEPESDP (104 aa)) are domain I, interacts with DnaA modulators. Positions 95–158 (PVDDEPESDP…TDFEEVDDDR (64 aa)) are disordered. Residues 104-123 (PPSRDHRPEPEPLHTPRHLE) show a composition bias toward basic and acidic residues. The domain II stretch occupies residues 105–187 (PSRDHRPEPE…GPAPSATGGN (83 aa)). Residues 149–158 (TDFEEVDDDR) are compositionally biased toward acidic residues. The tract at residues 188-404 (SLNAKYTFDT…GALIRVTAFA (217 aa)) is domain III, AAA+ region. Gly232, Gly234, Lys235, and Thr236 together coordinate ATP. The tract at residues 405–528 (SLNRQPLDLT…TARIKQRSKR (124 aa)) is domain IV, binds dsDNA.

The protein belongs to the DnaA family. As to quaternary structure, oligomerizes as a right-handed, spiral filament on DNA at oriC.

The protein resides in the cytoplasm. Functionally, plays an essential role in the initiation and regulation of chromosomal replication. ATP-DnaA binds to the origin of replication (oriC) to initiate formation of the DNA replication initiation complex once per cell cycle. Binds the DnaA box (a 9 base pair repeat at the origin) and separates the double-stranded (ds)DNA. Forms a right-handed helical filament on oriC DNA; dsDNA binds to the exterior of the filament while single-stranded (ss)DNA is stabiized in the filament's interior. The ATP-DnaA-oriC complex binds and stabilizes one strand of the AT-rich DNA unwinding element (DUE), permitting loading of DNA polymerase. After initiation quickly degrades to an ADP-DnaA complex that is not apt for DNA replication. Binds acidic phospholipids. The polypeptide is Chromosomal replication initiator protein DnaA (Rhodococcus jostii (strain RHA1)).